The chain runs to 139 residues: Putative pre-16S rRNA nuclease (139 aa).

Belongs to the YqgF nuclease family.

Its subcellular location is the cytoplasm. Could be a nuclease involved in processing of the 5'-end of pre-16S rRNA. This is Putative pre-16S rRNA nuclease from Streptococcus equi subsp. equi (strain 4047).